Reading from the N-terminus, the 324-residue chain is MLWIMAVLPLVLAGPELNVRMQGTDSIFEGLELKRSVRETDNNCSEGLYQVGPFCCQPCQPGERKVKDCTTSGGAPTCHPCTEGEEYTDRKHYSDKCRRCAFCDEGHGLEVETNCTRTQNTKCRCKENFYCNASLCDHCYHCTSCGLEDILEPCTRTSNTKCKKQSSNYKLLWLLILPGLAILFVFIYKRYRKRQPGDPESGIPSPESVPMNVSDVNLNKYIWRTAEKMKICDAKKFARQHKIPESKIDEIEHNSPQDAAEQKIQLLQCWYQSHGKTGACQALIQGLRKANRCDIAEEIQAMVWEDHENSISNSRNENEGQSLE.

The signal sequence occupies residues M1–M21. The Extracellular portion of the chain corresponds to Q22–L171. A glycan (N-linked (GlcNAc...) asparagine) is linked at N43. TNFR-Cys repeat units follow at residues N43–H79, P80–C123, and R124–K163. Disulfide bonds link C44/C55, C56/C69, C59/C78, C81/C97, C100/C115, C103/C123, C125/C139, C142/C154, and C145/C162. N114 and N132 each carry an N-linked (GlcNAc...) asparagine glycan. A helical transmembrane segment spans residues L172–Y188. The Cytoplasmic segment spans residues K189 to E324. An interaction with HIPK3 region spans residues S201 to D306. S214 carries the post-translational modification Phosphoserine. The interaction with CALM stretch occupies residues N219 to I243. The region spanning N219–V303 is the Death domain.

Component of the death-induced signaling complex (DISC) composed of cell surface receptor FAS/CD95, adapter protein FADD and the CASP8 protease; recruitment of CASP8 to the complex is required for processing of CASP8 into the p18 and p10 subunits. Interacts directly (via DED domain) with NOL3 (via CARD domain); inhibits death-inducing signaling complex (DISC) assembly by inhibiting the increase in FAS-FADD binding induced by FAS activation. Binds DAXX. Interacts with HIPK3. Part of a complex containing HIPK3 and FADD. Binds RIPK1 and FAIM2. Interacts with BABAM2 and FEM1B. Interacts with CALM. In the absence of stimulation, interacts with BIRC2, DDX3X and GSK3B. The interaction with BIRC2 and DDX3X is further enhanced upon receptor stimulation and accompanied by DDX3X and BIRC2 cleavage. Palmitoylated. Palmitoylation by ZDHHC7 prevents the lysosomal degradation of FAS regulating its expression at the plasma membrane.

It localises to the cell membrane. It is found in the membrane raft. Its function is as follows. Receptor for TNFSF6/FASLG. The adapter molecule FADD recruits caspase CASP8 to the activated receptor. The resulting death-inducing signaling complex (DISC) performs CASP8 proteolytic activation which initiates the subsequent cascade of caspases (aspartate-specific cysteine proteases) mediating apoptosis. FAS-mediated apoptosis may have a role in the induction of peripheral tolerance, in the antigen-stimulated suicide of mature T-cells, or both. The protein is Tumor necrosis factor receptor superfamily member 6 (Fas) of Rattus norvegicus (Rat).